The chain runs to 252 residues: Imidazole glycerol phosphate synthase subunit HisF (252 aa).

Residues Asp11 and Asp130 contribute to the active site.

The protein belongs to the HisA/HisF family. In terms of assembly, heterodimer of HisH and HisF.

The protein localises to the cytoplasm. The enzyme catalyses 5-[(5-phospho-1-deoxy-D-ribulos-1-ylimino)methylamino]-1-(5-phospho-beta-D-ribosyl)imidazole-4-carboxamide + L-glutamine = D-erythro-1-(imidazol-4-yl)glycerol 3-phosphate + 5-amino-1-(5-phospho-beta-D-ribosyl)imidazole-4-carboxamide + L-glutamate + H(+). The protein operates within amino-acid biosynthesis; L-histidine biosynthesis; L-histidine from 5-phospho-alpha-D-ribose 1-diphosphate: step 5/9. Its function is as follows. IGPS catalyzes the conversion of PRFAR and glutamine to IGP, AICAR and glutamate. The HisF subunit catalyzes the cyclization activity that produces IGP and AICAR from PRFAR using the ammonia provided by the HisH subunit. The polypeptide is Imidazole glycerol phosphate synthase subunit HisF (Sulfurihydrogenibium sp. (strain YO3AOP1)).